The following is a 492-amino-acid chain: Catalase isozyme 1 (492 aa).

Catalysis depends on residues H65 and N138. Y348 serves as a coordination point for heme.

It belongs to the catalase family. In terms of assembly, homotetramer. Heme is required as a cofactor.

The protein resides in the cytoplasm. The protein localises to the cytosol. Its subcellular location is the peroxisome matrix. It catalyses the reaction 2 H2O2 = O2 + 2 H2O. With respect to regulation, inhibited by salicylic acid. Catalyzes the degradation of hydrogen peroxide (H(2)O(2)) generated by peroxisomal oxidases to water and oxygen, thereby protecting cells from the toxic effects of hydrogen peroxide. The chain is Catalase isozyme 1 (CAT-1) from Nicotiana tabacum (Common tobacco).